The chain runs to 163 residues: Peptidyl-prolyl cis-trans isomerase-like 1 (163 aa).

The 155-residue stretch at 1–155 (MATDVAVETT…TEVKIVKARV (155 aa)) folds into the PPIase cyclophilin-type domain.

The protein belongs to the cyclophilin-type PPIase family. PPIL1 subfamily.

It catalyses the reaction [protein]-peptidylproline (omega=180) = [protein]-peptidylproline (omega=0). Functionally, PPIases accelerate the folding of proteins. It catalyzes the cis-trans isomerization of proline imidic peptide bonds in oligopeptides. The protein is Peptidyl-prolyl cis-trans isomerase-like 1 (ppi-1) of Neurospora crassa (strain ATCC 24698 / 74-OR23-1A / CBS 708.71 / DSM 1257 / FGSC 987).